The sequence spans 22 residues: MGFNGGILEGEEXKAVVTINXP.

The protein belongs to the enoyl-CoA hydratase/isomerase family.

The enzyme catalyses a short-chain (3S)-3-hydroxyacyl-CoA = a short-chain (2E)-enoyl-CoA + H2O. Its pathway is lipid metabolism; butanoate metabolism. The polypeptide is Short-chain-enoyl-CoA hydratase (crt) (Clostridium pasteurianum).